Reading from the N-terminus, the 238-residue chain is Ribonuclease PH (238 aa).

Residues arginine 86 and 124-126 contribute to the phosphate site; that span reads GTR.

This sequence belongs to the RNase PH family. In terms of assembly, homohexameric ring arranged as a trimer of dimers.

It catalyses the reaction tRNA(n+1) + phosphate = tRNA(n) + a ribonucleoside 5'-diphosphate. Phosphorolytic 3'-5' exoribonuclease that plays an important role in tRNA 3'-end maturation. Removes nucleotide residues following the 3'-CCA terminus of tRNAs; can also add nucleotides to the ends of RNA molecules by using nucleoside diphosphates as substrates, but this may not be physiologically important. Probably plays a role in initiation of 16S rRNA degradation (leading to ribosome degradation) during starvation. The sequence is that of Ribonuclease PH from Salmonella gallinarum (strain 287/91 / NCTC 13346).